The sequence spans 890 residues: Translation initiation factor IF-2 (890 aa).

Disordered regions lie at residues 31–164 (KLAQ…PAEP) and 189–266 (FKAP…ESLK). Over residues 42 to 54 (SSSEKPSAKEKSV) the composition is skewed to basic and acidic residues. Over residues 55-72 (KVALAATSTPTASAEQAS) the composition is skewed to low complexity. The span at 114–128 (PEPELEVVDEVCDES) shows a compositional bias: acidic residues. Basic and acidic residues-rich tracts occupy residues 149 to 163 (PQEK…KPAE) and 242 to 266 (PKRD…ESLK). Positions 395–564 (IRSPIVAFMG…ALQAEVLELK (170 aa)) constitute a tr-type G domain. Positions 404-411 (GHVDHGKT) are G1. 404–411 (GHVDHGKT) is a GTP binding site. Positions 429-433 (AITQH) are G2. Residues 450–453 (DTPG) are G3. GTP-binding positions include 450-454 (DTPGH) and 504-507 (NKCD). Residues 504 to 507 (NKCD) form a G4 region. The interval 540–542 (SAK) is G5.

Belongs to the TRAFAC class translation factor GTPase superfamily. Classic translation factor GTPase family. IF-2 subfamily.

It is found in the cytoplasm. In terms of biological role, one of the essential components for the initiation of protein synthesis. Protects formylmethionyl-tRNA from spontaneous hydrolysis and promotes its binding to the 30S ribosomal subunits. Also involved in the hydrolysis of GTP during the formation of the 70S ribosomal complex. The sequence is that of Translation initiation factor IF-2 (infB) from Chlamydia pneumoniae (Chlamydophila pneumoniae).